Consider the following 715-residue polypeptide: Transcription activator of gluconeogenesis MGYG_02011 (715 aa).

Positions 1-14 are enriched in polar residues; the sequence is MSPHQTTGQESDNM. The interval 1 to 28 is disordered; the sequence is MSPHQTTGQESDNMAVNGENAPASSQYI. The zn(2)-C6 fungal-type DNA-binding region spans 66–94; that stretch reads CYACQRGHLTCGDERPCQRCIKRGFQDAC. Composition is skewed to polar residues over residues 129–166, 179–191, 203–223, and 362–385; these read QNNV…PQNK, YASQ…TYQI, SLPQ…GQFN, and MMTT…RPNA. Disordered regions lie at residues 129-223, 354-414, 534-569, and 628-663; these read QNNV…GQFN, SPAS…RRRH, NHNV…NSST, and GSNG…NGRG. Residues 386–400 are compositionally biased toward low complexity; that stretch reads SVSQQRQQPVVSTPQ. Polar residues-rich tracts occupy residues 535–554 and 639–649; these read HNVN…SRGS and GEASSSEANEL. The span at 650–662 shows a compositional bias: low complexity; it reads NGSNANGATTNGR.

The protein belongs to the ERT1/acuK family.

The protein localises to the nucleus. In terms of biological role, transcription factor which regulates nonfermentable carbon utilization. Activator of gluconeogenetic genes. This chain is Transcription activator of gluconeogenesis MGYG_02011, found in Arthroderma gypseum (strain ATCC MYA-4604 / CBS 118893) (Microsporum gypseum).